The chain runs to 238 residues: Enolase-phosphatase E1 (238 aa).

The protein belongs to the HAD-like hydrolase superfamily. MasA/MtnC family. Monomer. It depends on Mg(2+) as a cofactor.

It carries out the reaction 5-methylsulfanyl-2,3-dioxopentyl phosphate + H2O = 1,2-dihydroxy-5-(methylsulfanyl)pent-1-en-3-one + phosphate. It functions in the pathway amino-acid biosynthesis; L-methionine biosynthesis via salvage pathway; L-methionine from S-methyl-5-thio-alpha-D-ribose 1-phosphate: step 3/6. It participates in amino-acid biosynthesis; L-methionine biosynthesis via salvage pathway; L-methionine from S-methyl-5-thio-alpha-D-ribose 1-phosphate: step 4/6. Its function is as follows. Bifunctional enzyme that catalyzes the enolization of 2,3-diketo-5-methylthiopentyl-1-phosphate (DK-MTP-1-P) into the intermediate 2-hydroxy-3-keto-5-methylthiopentenyl-1-phosphate (HK-MTPenyl-1-P), which is then dephosphorylated to form the acireductone 1,2-dihydroxy-3-keto-5-methylthiopentene (DHK-MTPene). The polypeptide is Enolase-phosphatase E1 (Synechococcus elongatus (strain ATCC 33912 / PCC 7942 / FACHB-805) (Anacystis nidulans R2)).